The primary structure comprises 208 residues: Fucoxanthin-chlorophyll a-c binding protein, chloroplastic (208 aa).

The transit peptide at 1 to 31 (MMTLASLPSTAIAGLASAAPKVQPRMAANDE) directs the protein to the chloroplast. Residues 102–118 (IPQLPYWLWIVMTIGIG) traverse the membrane as a helical segment.

This sequence belongs to the fucoxanthin chlorophyll protein family. In terms of assembly, the LHC complex of chromophytic algae is composed of fucoxanthin, chlorophyll A and C bound non-covalently by fucoxanthin chlorophyll proteins (FCPs). The ratio of pigments in this LHC is; fucoxanthin: chlorophyll C: chlorophyll A; (0.6-1): (0.1-0.3): (1).

It is found in the plastid. Its subcellular location is the chloroplast thylakoid membrane. Functionally, the light-harvesting complex (LHC) functions as a light receptor, it captures and delivers excitation energy to photosystems with which it is closely associated. Energy is transferred from the carotenoid and chlorophyll C (or B) to chlorophyll A and the photosynthetic reaction centers where it is used to synthesize ATP and reducing power. This chain is Fucoxanthin-chlorophyll a-c binding protein, chloroplastic (FCP), found in Isochrysis galbana (Marine planktonic alga).